The primary structure comprises 154 residues: Transcriptional repressor NrdR (154 aa).

A zinc finger spans residues 3-34; it reads CPFCGANDTKVIDSRLVAEGEQVRRRRECVAC. Residues 49–139 form the ATP-cone domain; sequence PRLIKQDGTR…VYRRFQDLDE (91 aa).

The protein belongs to the NrdR family. Zn(2+) is required as a cofactor.

Functionally, negatively regulates transcription of bacterial ribonucleotide reductase nrd genes and operons by binding to NrdR-boxes. The sequence is that of Transcriptional repressor NrdR from Pseudomonas putida (strain ATCC 700007 / DSM 6899 / JCM 31910 / BCRC 17059 / LMG 24140 / F1).